Consider the following 55-residue polypeptide: ATP synthase F(0) complex subunit 8 (55 aa).

The chain crosses the membrane as a helical span at residues 9–29 (WFFIMIMSWAVFLLLIQPKLL).

This sequence belongs to the ATPase protein 8 family. As to quaternary structure, component of the ATP synthase complex composed at least of ATP5F1A/subunit alpha, ATP5F1B/subunit beta, ATP5MC1/subunit c (homooctomer), MT-ATP6/subunit a, MT-ATP8/subunit 8, ATP5ME/subunit e, ATP5MF/subunit f, ATP5MG/subunit g, ATP5MK/subunit k, ATP5MJ/subunit j, ATP5F1C/subunit gamma, ATP5F1D/subunit delta, ATP5F1E/subunit epsilon, ATP5PF/subunit F6, ATP5PB/subunit b, ATP5PD/subunit d, ATP5PO/subunit OSCP. ATP synthase complex consists of a soluble F(1) head domain (subunits alpha(3) and beta(3)) - the catalytic core - and a membrane F(0) domain - the membrane proton channel (subunits c, a, 8, e, f, g, k and j). These two domains are linked by a central stalk (subunits gamma, delta, and epsilon) rotating inside the F1 region and a stationary peripheral stalk (subunits F6, b, d, and OSCP).

Its subcellular location is the mitochondrion membrane. In terms of biological role, subunit 8, of the mitochondrial membrane ATP synthase complex (F(1)F(0) ATP synthase or Complex V) that produces ATP from ADP in the presence of a proton gradient across the membrane which is generated by electron transport complexes of the respiratory chain. ATP synthase complex consist of a soluble F(1) head domain - the catalytic core - and a membrane F(1) domain - the membrane proton channel. These two domains are linked by a central stalk rotating inside the F(1) region and a stationary peripheral stalk. During catalysis, ATP synthesis in the catalytic domain of F(1) is coupled via a rotary mechanism of the central stalk subunits to proton translocation. In vivo, can only synthesize ATP although its ATP hydrolase activity can be activated artificially in vitro. Part of the complex F(0) domain. The protein is ATP synthase F(0) complex subunit 8 of Rhea americana (Greater rhea).